The sequence spans 298 residues: KH domain-containing protein At1g09660/At1g09670 (298 aa).

Residues 152–219 (DVPVDKYPSY…EHLCEPLHVL (68 aa)) enclose the KH domain. Residues 266–298 (NGTLREESPSPSLSPCLSPSMSPFNSKRAKTEI) form a disordered region. Phosphoserine is present on residues Ser-273 and Ser-287. Low complexity predominate over residues 274–288 (PSPSLSPCLSPSMSP).

The protein localises to the nucleus. This is KH domain-containing protein At1g09660/At1g09670 from Arabidopsis thaliana (Mouse-ear cress).